Consider the following 22-residue polypeptide: SASPGLPKGEKEQQEAIEHIDE.

Residues 1–22 (SASPGLPKGEKEQQEAIEHIDE) form a disordered region. Positions 8–22 (KGEKEQQEAIEHIDE) are enriched in basic and acidic residues.

This sequence to human SET/PHAPII protein. In terms of assembly, oligomer.

The protein localises to the cytoplasm. Its function is as follows. Has a role in the physiological regulation of fucosylation processes. The chain is Fuctinin-1 from Rattus norvegicus (Rat).